Consider the following 205-residue polypeptide: FMN-dependent NADH:quinone oxidoreductase (205 aa).

FMN-binding positions include Ser-10, 16–18, and 96–99; these read SHS and MYNF.

The protein belongs to the azoreductase type 1 family. In terms of assembly, homodimer. The cofactor is FMN.

The catalysed reaction is 2 a quinone + NADH + H(+) = 2 a 1,4-benzosemiquinone + NAD(+). It catalyses the reaction N,N-dimethyl-1,4-phenylenediamine + anthranilate + 2 NAD(+) = 2-(4-dimethylaminophenyl)diazenylbenzoate + 2 NADH + 2 H(+). Functionally, quinone reductase that provides resistance to thiol-specific stress caused by electrophilic quinones. Also exhibits azoreductase activity. Catalyzes the reductive cleavage of the azo bond in aromatic azo compounds to the corresponding amines. This is FMN-dependent NADH:quinone oxidoreductase from Nostoc punctiforme (strain ATCC 29133 / PCC 73102).